The chain runs to 348 residues: Xaa-Pro dipeptidase (348 aa).

Co(2+) is bound by residues aspartate 209, aspartate 220, histidine 284, glutamate 313, and glutamate 327.

The protein belongs to the peptidase M24B family. Archaeal-type prolidase subfamily. In terms of assembly, homodimer. Requires Co(2+) as cofactor. It depends on Mn(2+) as a cofactor.

Its subcellular location is the cytoplasm. It carries out the reaction Xaa-L-Pro dipeptide + H2O = an L-alpha-amino acid + L-proline. In terms of biological role, splits dipeptides with a prolyl in the C-terminal position and a nonpolar amino acid at the N-terminal position. This chain is Xaa-Pro dipeptidase (pepQ), found in Pyrococcus furiosus (strain ATCC 43587 / DSM 3638 / JCM 8422 / Vc1).